A 287-amino-acid polypeptide reads, in one-letter code: Centromere protein P (287 aa).

Residues 1 to 37 (MDNSVYQVYEDEIQLLEEEIKLLSDKYEDIQQESTFF) adopt a coiled-coil conformation.

Belongs to the CENP-P/CTF19 family. Component of the CENPA-HI complex, at least composed of CENPH, CENPI, CENPK, CENPL, CENPM, CENPO and CENPP.

The protein localises to the nucleus. It is found in the chromosome. The protein resides in the centromere. Its function is as follows. Component of the CENPA-HI complex, a centromeric complex involved in assembly of kinetochore proteins, mitotic progression and chromosome segregation. This is Centromere protein P (CENPP) from Gallus gallus (Chicken).